The following is a 521-amino-acid chain: 56 kDa type-specific antigen (521 aa).

Positions 1-22 (MRKIMLIASAMSALSLPFSANA) are cleaved as a signal peptide. The chain crosses the membrane as a helical span at residues 64-86 (LPLIKGMPFGVTLAAGMTITPGV). The segment at 386 to 415 (LGVDQGQEGGCSKDKKQSDTTAEESKKEGK) is disordered. Residues 396–415 (CSKDKKQSDTTAEESKKEGK) show a composition bias toward basic and acidic residues. The helical transmembrane segment at 469-484 (TGMVGSLALGVAANVA) threads the bilayer.

Its subcellular location is the cell membrane. In terms of biological role, may be an adherent factor for rickettsial adsorption to the host-cell surface and a determinant of virulence of individual rickettsial strain. It is the major outer membrane protein. The polypeptide is 56 kDa type-specific antigen (Orientia tsutsugamushi (Rickettsia tsutsugamushi)).